The following is a 120-amino-acid chain: Large ribosomal subunit protein bL12 (120 aa).

This sequence belongs to the bacterial ribosomal protein bL12 family. In terms of assembly, homodimer. Part of the ribosomal stalk of the 50S ribosomal subunit. Forms a multimeric L10(L12)X complex, where L10 forms an elongated spine to which 2 to 4 L12 dimers bind in a sequential fashion. Binds GTP-bound translation factors.

Forms part of the ribosomal stalk which helps the ribosome interact with GTP-bound translation factors. Is thus essential for accurate translation. The polypeptide is Large ribosomal subunit protein bL12 (Listeria innocua serovar 6a (strain ATCC BAA-680 / CLIP 11262)).